A 349-amino-acid polypeptide reads, in one-letter code: Hypoxia-inducible factor 1-alpha inhibitor (349 aa).

Residues 1–14 (MAATAAEVAASGSG) show a composition bias toward low complexity. Residues 1-51 (MAATAAEVAASGSGEAREEAEAPGPAWDESQLRSYSFPTRPIPRLSQSDPR) are disordered. Alanine 2 is subject to N-acetylalanine. An interaction with VHL region spans residues 2 to 125 (AATAAEVAAS…PRSNREEIKF (124 aa)). The JmjC domain occupies 142-307 (ERLYLQQTLN…KGAPTPKRIE (166 aa)). 2-oxoglutarate is bound at residue tyrosine 145. Substrate-binding positions include aspartate 152 and 181 to 183 (QLT). Threonine 196 lines the 2-oxoglutarate pocket. Fe cation is bound by residues histidine 199 and aspartate 201. 201-203 (DEQ) is a substrate binding site. 2-oxoglutarate is bound by residues asparagine 205 and lysine 214. Residue 238 to 239 (RQ) participates in substrate binding. A Fe cation-binding site is contributed by histidine 279. Asparagine 294 serves as a coordination point for 2-oxoglutarate. Substrate contacts are provided by alanine 300 and asparagine 321.

Homodimer; homodimerization is essential for catalytic activity. Interacts with VHL and HIF1A. Part of a complex with VHL, HIF1A and HDAC1 or HDAC2 or HDAC3. Interacts with NFKB1 and NFKBIA. Interacts with NOTCH1, NOTCH2 and NOTCH3 but not with NOTCH4. Interacts with ABPA3. Interacts with TNKS2. Interacts with PPP1R12A. Interacts with UBE3A. Interacts with ASB4. Interacts with ANKS3. Interacts with NECAB3; the interaction is indirect and seems to be mediated by APBA3. Fe(2+) serves as cofactor.

Its subcellular location is the nucleus. It is found in the cytoplasm. It localises to the perinuclear region. It carries out the reaction L-asparaginyl-[hypoxia-inducible factor alpha subunit] + 2-oxoglutarate + O2 = (3S)-3-hydroxy-L-asparaginyl-[hypoxia-inducible factor alpha subunit] + succinate + CO2. The catalysed reaction is L-histidyl-[ankyrin-repeat domain protein] + 2-oxoglutarate + O2 = (3S)-3-hydroxy-L-histidyl-[ankyrin-repeat domain protein] + succinate + CO2. The enzyme catalyses L-asparaginyl-[ankyrin-repeat domain protein] + 2-oxoglutarate + O2 = (3S)-3-hydroxy-L-asparaginyl-[ankyrin-repeat domain protein] + succinate + CO2. It catalyses the reaction L-aspartyl-[ankyrin-repeat domain protein] + 2-oxoglutarate + O2 = (3S)-3-hydroxy-L-aspartyl-[ankyrin-repeat domain protein] + succinate + CO2. Its function is as follows. Hydroxylates HIF-1 alpha at 'Asn-799' in the C-terminal transactivation domain (CAD). Functions as an oxygen sensor and, under normoxic conditions, the hydroxylation prevents interaction of HIF-1 with transcriptional coactivators including Cbp/p300-interacting transactivator. Involved in transcriptional repression through interaction with HIF1A, VHL and histone deacetylases. Hydroxylates specific Asn residues within ankyrin repeat domains (ARD) of NFKB1, NFKBIA, NOTCH1, ASB4, PPP1R12A and several other ARD-containing proteins. Also hydroxylates Asp and His residues within ARDs of ANK1 and TNKS2, respectively. Negatively regulates NOTCH1 activity, accelerating myogenic differentiation. Positively regulates ASB4 activity, promoting vascular differentiation. In Mus musculus (Mouse), this protein is Hypoxia-inducible factor 1-alpha inhibitor (Hif1an).